Consider the following 152-residue polypeptide: UPF0266 membrane protein YobD (152 aa).

The next 3 helical transmembrane spans lie at 6-26 (LVLI…QFIM), 45-65 (VDSV…VTSH), and 67-87 (AQMT…IFWI).

This sequence belongs to the UPF0266 family.

Its subcellular location is the cell inner membrane. The protein is UPF0266 membrane protein YobD of Salmonella choleraesuis (strain SC-B67).